Here is a 279-residue protein sequence, read N- to C-terminus: Proteasome subunit beta (279 aa).

The propeptide at 1–51 is removed in mature form; by autocatalysis; that stretch reads MTFDASGRLPEAFLTPGGSSFMDFLAGHAPDLLPGRRSLGTGDLSKDVPHG. Threonine 52 acts as the Nucleophile in catalysis.

It belongs to the peptidase T1B family. In terms of assembly, the 20S proteasome core is composed of 14 alpha and 14 beta subunits that assemble into four stacked heptameric rings, resulting in a barrel-shaped structure. The two inner rings, each composed of seven catalytic beta subunits, are sandwiched by two outer rings, each composed of seven alpha subunits. The catalytic chamber with the active sites is on the inside of the barrel. Has a gated structure, the ends of the cylinder being occluded by the N-termini of the alpha-subunits. Is capped by the proteasome-associated ATPase, ARC.

The protein resides in the cytoplasm. The enzyme catalyses Cleavage of peptide bonds with very broad specificity.. It functions in the pathway protein degradation; proteasomal Pup-dependent pathway. With respect to regulation, the formation of the proteasomal ATPase ARC-20S proteasome complex, likely via the docking of the C-termini of ARC into the intersubunit pockets in the alpha-rings, may trigger opening of the gate for substrate entry. Interconversion between the open-gate and close-gate conformations leads to a dynamic regulation of the 20S proteasome proteolysis activity. Its function is as follows. Component of the proteasome core, a large protease complex with broad specificity involved in protein degradation. The sequence is that of Proteasome subunit beta from Kribbella flavida (strain DSM 17836 / JCM 10339 / NBRC 14399).